The sequence spans 274 residues: Large ribosomal subunit protein uL2 (274 aa).

The segment at 223–274 (VVMNPVDHPHGGGEGRTSGGRHPVSPWGVPTKGFKTRKNKRTDKYIVRRRTK) is disordered. The segment covering 256–274 (FKTRKNKRTDKYIVRRRTK) has biased composition (basic residues).

Belongs to the universal ribosomal protein uL2 family. Part of the 50S ribosomal subunit. Forms a bridge to the 30S subunit in the 70S ribosome.

Its function is as follows. One of the primary rRNA binding proteins. Required for association of the 30S and 50S subunits to form the 70S ribosome, for tRNA binding and peptide bond formation. It has been suggested to have peptidyltransferase activity; this is somewhat controversial. Makes several contacts with the 16S rRNA in the 70S ribosome. This Vibrio atlanticus (strain LGP32) (Vibrio splendidus (strain Mel32)) protein is Large ribosomal subunit protein uL2.